The sequence spans 364 residues: Mannonate dehydratase (364 aa).

Belongs to the mannonate dehydratase family. Fe(2+) serves as cofactor. It depends on Mn(2+) as a cofactor.

It catalyses the reaction D-mannonate = 2-dehydro-3-deoxy-D-gluconate + H2O. It functions in the pathway carbohydrate metabolism; pentose and glucuronate interconversion. Catalyzes the dehydration of D-mannonate. The protein is Mannonate dehydratase of Endomicrobium trichonymphae.